A 637-amino-acid chain; its full sequence is MNANPKFLSATATVDEAAIQPLPNSTKIYIQGSRPDIRVPMRKITQSDTAASFGFEKNPAIYVYDTSGPYTDPEAKIDIRSGLDTPRLPWILERQDTEELPGPTSEYGIERLNDPKLAELRFNLHRKPRRALAGKNVSQMHYARQGIITPEMEFVAIRENMNRRAYLEELKQSGPKGEKLAELMGRQHPGQSFGAAIPQEITAEFVRSEIARGRAIIPANINHPEIEPMIIGRNFLVKINANIGNSAVTSSIGEEVEKMTWAIRWGGDNVMDLSTGKHIHETREWIIRNSPVPIGTVPIYQALEKVNGKAEDLTWEIFRDTLIEQAEQGVDYFTIHAGVLLRYVPMTAKRMTGIVSRGGSIMAKWCLAHHKESFLYEHFEDICEIMKAYDVSFSLGDGLRPGSIYDANDEAQLGELKTLGELTQIAWKHDVQVMIEGPGHVPMHLIKENMDLQLEQCHEAPFYTLGPLTTDIAPGYDHITSGIGAAQIGWYGTAMLCYVTPKEHLGLPNKVDVKDGIITYKIAAHAADLAKGHIGAQIRDNALSKARFEFRWDDQFNIGLDPDKAREFHDETLPKDSAKVAHFCSMCGPHFCSMKITQEVREYAAKQGITEIQALKKGMEVKAIEFVKSGSEIYQKQ.

Substrate contacts are provided by residues asparagine 242, methionine 271, tyrosine 300, histidine 336, 356-358, 397-400, and glutamate 436; these read SRG and DGLR. Histidine 440 provides a ligand contact to Zn(2+). Tyrosine 463 serves as a coordination point for substrate. Residue histidine 504 coordinates Zn(2+). Cysteine 584, cysteine 587, and cysteine 592 together coordinate [4Fe-4S] cluster.

It belongs to the ThiC family. Homodimer. [4Fe-4S] cluster serves as cofactor.

It catalyses the reaction 5-amino-1-(5-phospho-beta-D-ribosyl)imidazole + S-adenosyl-L-methionine = 4-amino-2-methyl-5-(phosphooxymethyl)pyrimidine + CO + 5'-deoxyadenosine + formate + L-methionine + 3 H(+). Its pathway is cofactor biosynthesis; thiamine diphosphate biosynthesis. Its function is as follows. Catalyzes the synthesis of the hydroxymethylpyrimidine phosphate (HMP-P) moiety of thiamine from aminoimidazole ribotide (AIR) in a radical S-adenosyl-L-methionine (SAM)-dependent reaction. The protein is Phosphomethylpyrimidine synthase of Herminiimonas arsenicoxydans.